Reading from the N-terminus, the 467-residue chain is Light-independent protochlorophyllide reductase subunit N (467 aa).

The [4Fe-4S] cluster site is built by Cys22, Cys47, and Cys107.

Belongs to the BchN/ChlN family. Protochlorophyllide reductase is composed of three subunits; ChlL, ChlN and ChlB. Forms a heterotetramer of two ChlB and two ChlN subunits. [4Fe-4S] cluster serves as cofactor.

The protein resides in the plastid. Its subcellular location is the chloroplast. The enzyme catalyses chlorophyllide a + oxidized 2[4Fe-4S]-[ferredoxin] + 2 ADP + 2 phosphate = protochlorophyllide a + reduced 2[4Fe-4S]-[ferredoxin] + 2 ATP + 2 H2O. It functions in the pathway porphyrin-containing compound metabolism; chlorophyll biosynthesis (light-independent). In terms of biological role, component of the dark-operative protochlorophyllide reductase (DPOR) that uses Mg-ATP and reduced ferredoxin to reduce ring D of protochlorophyllide (Pchlide) to form chlorophyllide a (Chlide). This reaction is light-independent. The NB-protein (ChlN-ChlB) is the catalytic component of the complex. This Pinus thunbergii (Japanese black pine) protein is Light-independent protochlorophyllide reductase subunit N.